Consider the following 282-residue polypeptide: Dihydroorotate dehydrogenase B (NAD(+)), electron transfer subunit homolog (282 aa).

The 99-residue stretch at 2 to 100 folds into the FAD-binding FR-type domain; that stretch reads GGTALNEIVK…VGPLGNPSEI (99 aa). 3 residues coordinate [2Fe-2S] cluster: C225, C228, and C240.

It belongs to the PyrK family. The cofactor is [2Fe-2S] cluster. FAD serves as cofactor.

The sequence is that of Dihydroorotate dehydrogenase B (NAD(+)), electron transfer subunit homolog from Thermotoga maritima (strain ATCC 43589 / DSM 3109 / JCM 10099 / NBRC 100826 / MSB8).